The sequence spans 301 residues: MKTKAGFVALIGKPNAGKSTLLNTLLNAHLALVSHKANATRKLMKCIVPFKDKEGYESQIIFLDTPGLHHQEKLLNQCMLSQALKAMGDAELCVFLASVHDDLKGYEEFLSLCQKPHILAVSKIDTAVHKQVLQKLQEYQQYASQFLALVPLSAKKSQNLNALLECISKHLSPSAWLFEKDLMSDEKMCDIYKEIIRESLFDFLSDEIPYESDVMIDKFIEEERIDKVYAHIIVEKESQKKIVIGKNGVNIKRIGTNARLKMQEVGEKKVFLNLQVIAQKSWSKEEKSLQKLGYIYQRNRD.

Positions 4–173 constitute an Era-type G domain; it reads KAGFVALIGK…LECISKHLSP (170 aa). The segment at 12–19 is G1; that stretch reads GKPNAGKS. Position 12 to 19 (12 to 19) interacts with GTP; the sequence is GKPNAGKS. Residues 38–42 form a G2 region; it reads NATRK. Residues 64-67 form a G3 region; that stretch reads DTPG. GTP is bound by residues 64 to 68 and 122 to 125; these read DTPGL and SKID. The tract at residues 122–125 is G4; sequence SKID. Residues 152–154 are G5; that stretch reads LSA. Positions 204–280 constitute a KH type-2 domain; it reads LSDEIPYESD…FLNLQVIAQK (77 aa).

It belongs to the TRAFAC class TrmE-Era-EngA-EngB-Septin-like GTPase superfamily. Era GTPase family. Monomer.

The protein resides in the cytoplasm. Its subcellular location is the cell inner membrane. Functionally, an essential GTPase that binds both GDP and GTP, with rapid nucleotide exchange. Plays a role in 16S rRNA processing and 30S ribosomal subunit biogenesis and possibly also in cell cycle regulation and energy metabolism. This Helicobacter pylori (strain Shi470) protein is GTPase Era.